The following is a 586-amino-acid chain: A-type ATP synthase subunit A (586 aa).

Position 238 to 245 (Gly238 to Thr245) interacts with ATP.

This sequence belongs to the ATPase alpha/beta chains family. In terms of assembly, has multiple subunits with at least A(3), B(3), C, D, E, F, H, I and proteolipid K(x).

It localises to the cell membrane. It carries out the reaction ATP + H2O + 4 H(+)(in) = ADP + phosphate + 5 H(+)(out). In terms of biological role, component of the A-type ATP synthase that produces ATP from ADP in the presence of a proton gradient across the membrane. The A chain is the catalytic subunit. The polypeptide is A-type ATP synthase subunit A (Haloferax volcanii (strain ATCC 29605 / DSM 3757 / JCM 8879 / NBRC 14742 / NCIMB 2012 / VKM B-1768 / DS2) (Halobacterium volcanii)).